The primary structure comprises 1073 residues: Carbamoyl phosphate synthase large chain (1073 aa).

The tract at residues 1-399 (MPKREDIKKV…SLLKAFKSLD (399 aa)) is carboxyphosphate synthetic domain. The ATP site is built by Arg-129, Arg-169, Gly-175, Gly-176, Glu-208, Val-210, Glu-215, Gly-241, Val-242, His-243, Gln-284, and Glu-296. In terms of domain architecture, ATP-grasp 1 spans 133 to 325 (KETMLSIGEK…IARVTAKIAI (193 aa)). Positions 284, 296, and 298 each coordinate Mg(2+). Gln-284, Glu-296, and Asn-298 together coordinate Mn(2+). The oligomerization domain stretch occupies residues 400 to 540 (IDNQLGIKRW…YSTYEDTCET (141 aa)). Residues 541-931 (NSTDKKKILI…YKAELAADNL (391 aa)) are carbamoyl phosphate synthetic domain. The ATP-grasp 2 domain occupies 672-863 (YLLMQELGIP…LAKIAAKVIA (192 aa)). ATP is bound by residues Arg-708, Asp-747, Leu-749, Glu-754, Gly-779, Val-780, His-781, Ser-782, Gln-822, and Glu-834. Positions 822, 834, and 836 each coordinate Mg(2+). 3 residues coordinate Mn(2+): Gln-822, Glu-834, and Asn-836. The MGS-like domain maps to 930 to 1071 (NLLPLTGKVF…NEYHKEMEQK (142 aa)). The interval 932–1073 (LPLTGKVFLS…YHKEMEQKEE (142 aa)) is allosteric domain.

It belongs to the CarB family. Composed of two chains; the small (or glutamine) chain promotes the hydrolysis of glutamine to ammonia, which is used by the large (or ammonia) chain to synthesize carbamoyl phosphate. Tetramer of heterodimers (alpha,beta)4. Mg(2+) is required as a cofactor. Mn(2+) serves as cofactor.

The enzyme catalyses hydrogencarbonate + L-glutamine + 2 ATP + H2O = carbamoyl phosphate + L-glutamate + 2 ADP + phosphate + 2 H(+). The catalysed reaction is hydrogencarbonate + NH4(+) + 2 ATP = carbamoyl phosphate + 2 ADP + phosphate + 2 H(+). The protein operates within amino-acid biosynthesis; L-arginine biosynthesis; carbamoyl phosphate from bicarbonate: step 1/1. It functions in the pathway pyrimidine metabolism; UMP biosynthesis via de novo pathway; (S)-dihydroorotate from bicarbonate: step 1/3. Its function is as follows. Large subunit of the glutamine-dependent carbamoyl phosphate synthetase (CPSase). CPSase catalyzes the formation of carbamoyl phosphate from the ammonia moiety of glutamine, carbonate, and phosphate donated by ATP, constituting the first step of 2 biosynthetic pathways, one leading to arginine and/or urea and the other to pyrimidine nucleotides. The large subunit (synthetase) binds the substrates ammonia (free or transferred from glutamine from the small subunit), hydrogencarbonate and ATP and carries out an ATP-coupled ligase reaction, activating hydrogencarbonate by forming carboxy phosphate which reacts with ammonia to form carbamoyl phosphate. This is Carbamoyl phosphate synthase large chain from Methanosarcina mazei (strain ATCC BAA-159 / DSM 3647 / Goe1 / Go1 / JCM 11833 / OCM 88) (Methanosarcina frisia).